Consider the following 313-residue polypeptide: Ribosomal protein uL3 glutamine methyltransferase (313 aa).

This sequence belongs to the protein N5-glutamine methyltransferase family. PrmB subfamily.

It carries out the reaction L-glutaminyl-[ribosomal protein uL3] + S-adenosyl-L-methionine = N(5)-methyl-L-glutaminyl-[ribosomal protein uL3] + S-adenosyl-L-homocysteine + H(+). Functionally, methylates large ribosomal subunit protein uL3 on a specific glutamine residue. This chain is Ribosomal protein uL3 glutamine methyltransferase, found in Pasteurella multocida (strain Pm70).